The sequence spans 957 residues: MSQLPSLSQLRDPHAFLRRHLGPDAAEQQAMLDSLGLGSRVELIEQTVPPGIRLNRELDLPPALDEQAALARLRGYAEQNQVWTSLIGMGYHGTLTPTVILRNVLENPGWYTAYTPYQPEIAQGRLEALLNFQQLTIDLTGLELANASLLDEATAAAEAMALAKRVAKSKSNLFFVDENCHPQTISVVQTRAEGFGFELIVDAVDNLKQHQVFGALLQYPDTHGEIRDLRPLIDHLHAQQALACVAADLLSLLLLTPPGELGADVVFGSSQRFGVPMGYGGPHAAVFASREEYKRAIPGRIIGVSKDARGNVALRMALQTREQHIRREKANSNICTAQVLLANIASFYAVYHGPEGLKRIAQRVHRLTCILAAGLERHGIQRLNQHFFDTLTLDVGGAQTAIIESAQAAQINLRILGRGQLGLSLDEACDENTVARLFDVLLGADHGLSIDDLDAETLASGIPEMLQRSTSYLRHPVFNAHHSETEMLRYLKQLENKDLALNQSMIPLGSCTMKLNATSEMIPITWPQFANLHPFVPREQAVGYTLMIEELERWLCAITGFDAICMQPNSGAQGEYAGLLAIRKYHESRQQGGRDICLIPSSAHGTNPASAQMAGMRVVIVECDDAGNVDLEDLKAKASEAGAKLSCLMATYPSTHGVYEEGISEICEVIHKHGGQVYMDGANLNAQVGLARPADIGADVSHMNLHKTFCIPHGGGGPGMGPIGVRAHLAPFVANHPVVPIDGPQPQNGAVSAAPWGSASILPISWMYIAMMGPQLADASEVAILAANYLAQHLSGAFPVLYTGRNERVAHECILDLRPLKAATGISEEDVAKRLMDYGFHAPTMSFPVPGTLMVEPTESESKAELDRFIGAMLSIRAEITEVQNGNWPAEDNPLKRAPHTMADITGVWERPYSIEQGITPDAHTKAHKYWPAVNRVDNVYGDRNLFCACVPVDDYR.

Lys707 carries the N6-(pyridoxal phosphate)lysine modification.

This sequence belongs to the GcvP family. As to quaternary structure, the glycine cleavage system is composed of four proteins: P, T, L and H. Pyridoxal 5'-phosphate serves as cofactor.

It catalyses the reaction N(6)-[(R)-lipoyl]-L-lysyl-[glycine-cleavage complex H protein] + glycine + H(+) = N(6)-[(R)-S(8)-aminomethyldihydrolipoyl]-L-lysyl-[glycine-cleavage complex H protein] + CO2. The glycine cleavage system catalyzes the degradation of glycine. The P protein binds the alpha-amino group of glycine through its pyridoxal phosphate cofactor; CO(2) is released and the remaining methylamine moiety is then transferred to the lipoamide cofactor of the H protein. The protein is Glycine dehydrogenase (decarboxylating) 2 of Pseudomonas fluorescens (strain Pf0-1).